Reading from the N-terminus, the 504-residue chain is Phosphoenolpyruvate carboxylase (504 aa).

Over residues Met1 to Asp16 the composition is skewed to polar residues. Positions Met1–Pro21 are disordered.

It belongs to the PEPCase type 2 family. Homotetramer. Requires Mg(2+) as cofactor.

It carries out the reaction oxaloacetate + phosphate = phosphoenolpyruvate + hydrogencarbonate. Catalyzes the irreversible beta-carboxylation of phosphoenolpyruvate (PEP) to form oxaloacetate (OAA), a four-carbon dicarboxylic acid source for the tricarboxylic acid cycle. This chain is Phosphoenolpyruvate carboxylase, found in Leuconostoc mesenteroides subsp. mesenteroides (strain ATCC 8293 / DSM 20343 / BCRC 11652 / CCM 1803 / JCM 6124 / NCDO 523 / NBRC 100496 / NCIMB 8023 / NCTC 12954 / NRRL B-1118 / 37Y).